Here is a 1278-residue protein sequence, read N- to C-terminus: Alpha-glucan water dikinase 2 (1278 aa).

The signal sequence occupies residues 1–23; sequence MATSKSQQFQLIEGMELQITVTG. His-886 acts as the Tele-phosphohistidine intermediate in catalysis.

This sequence belongs to the PEP-utilizing enzyme family. In terms of assembly, homodimer. Requires Mg(2+) as cofactor.

The enzyme catalyses [(1-&gt;4)-alpha-D-glucosyl](n) + n ATP + n H2O = [(1-&gt;4)-6-phospho-alpha-D-glucosyl](n) + n AMP + n phosphate + 2n H(+). Functionally, mediates the incorporation of phosphate into alpha-glucan, mostly at the C-6 position of glucose units. The chain is Alpha-glucan water dikinase 2 (GWD2) from Arabidopsis thaliana (Mouse-ear cress).